The chain runs to 476 residues: Glutamate--tRNA ligase (476 aa).

The 'HIGH' region signature appears at 8-18 (PSPTGTLHIGT). The 'KMSKS' region signature appears at 247–251 (KLSKR). K250 provides a ligand contact to ATP.

This sequence belongs to the class-I aminoacyl-tRNA synthetase family. Glutamate--tRNA ligase type 1 subfamily. As to quaternary structure, monomer.

It is found in the cytoplasm. The catalysed reaction is tRNA(Glu) + L-glutamate + ATP = L-glutamyl-tRNA(Glu) + AMP + diphosphate. Its function is as follows. Catalyzes the attachment of glutamate to tRNA(Glu) in a two-step reaction: glutamate is first activated by ATP to form Glu-AMP and then transferred to the acceptor end of tRNA(Glu). In Synechococcus sp. (strain WH7803), this protein is Glutamate--tRNA ligase.